A 527-amino-acid chain; its full sequence is tRNA-2-methylthio-N(6)-dimethylallyladenosine synthase (527 aa).

The segment at 1 to 27 (MMNEKQRLQYTAQIETDHPTDKKSALD) is disordered. Residues 15–27 (ETDHPTDKKSALD) are compositionally biased toward basic and acidic residues. One can recognise an MTTase N-terminal domain in the interval 84–202 (RKFYIRTYGC…LPYILKEAYM (119 aa)). The [4Fe-4S] cluster site is built by cysteine 93, cysteine 129, cysteine 163, cysteine 239, cysteine 243, and cysteine 246. The 231-residue stretch at 225 to 455 (RKGNIKAWVN…NALVNEISAK (231 aa)) folds into the Radical SAM core domain. Residues 458 to 521 (KEYEGQVVEV…TWTLNGEMVE (64 aa)) form the TRAM domain.

The protein belongs to the methylthiotransferase family. MiaB subfamily. In terms of assembly, monomer. [4Fe-4S] cluster serves as cofactor.

The protein resides in the cytoplasm. It carries out the reaction N(6)-dimethylallyladenosine(37) in tRNA + (sulfur carrier)-SH + AH2 + 2 S-adenosyl-L-methionine = 2-methylsulfanyl-N(6)-dimethylallyladenosine(37) in tRNA + (sulfur carrier)-H + 5'-deoxyadenosine + L-methionine + A + S-adenosyl-L-homocysteine + 2 H(+). Its function is as follows. Catalyzes the methylthiolation of N6-(dimethylallyl)adenosine (i(6)A), leading to the formation of 2-methylthio-N6-(dimethylallyl)adenosine (ms(2)i(6)A) at position 37 in tRNAs that read codons beginning with uridine. This Anoxybacillus flavithermus (strain DSM 21510 / WK1) protein is tRNA-2-methylthio-N(6)-dimethylallyladenosine synthase.